We begin with the raw amino-acid sequence, 356 residues long: Glycerol-1-phosphate dehydrogenase [NAD(P)+] (356 aa).

NAD(+)-binding positions include 103 to 107 (GRSID) and 125 to 128 (TAAS). Aspartate 130 serves as a coordination point for substrate. Serine 134 provides a ligand contact to NAD(+). Position 177 (aspartate 177) interacts with substrate. Zn(2+) is bound by residues aspartate 177 and histidine 257. Histidine 261 contributes to the substrate binding site. Position 273 (histidine 273) interacts with Zn(2+).

Belongs to the glycerol-1-phosphate dehydrogenase family. Requires Zn(2+) as cofactor.

Its subcellular location is the cytoplasm. The enzyme catalyses sn-glycerol 1-phosphate + NAD(+) = dihydroxyacetone phosphate + NADH + H(+). The catalysed reaction is sn-glycerol 1-phosphate + NADP(+) = dihydroxyacetone phosphate + NADPH + H(+). It functions in the pathway membrane lipid metabolism; glycerophospholipid metabolism. Catalyzes the NAD(P)H-dependent reduction of dihydroxyacetonephosphate (DHAP or glycerone phosphate) to glycerol 1-phosphate (G1P). The G1P thus generated is used as the glycerophosphate backbone of phospholipids in the cellular membranes of Archaea. The polypeptide is Glycerol-1-phosphate dehydrogenase [NAD(P)+] (Methanosarcina acetivorans (strain ATCC 35395 / DSM 2834 / JCM 12185 / C2A)).